The sequence spans 129 residues: Trefoil factor 2 (129 aa).

An N-terminal signal peptide occupies residues 1–23 (MGPRGAPLLAVVLVLGLHALVEG). P-type domains follow at residues 29–73 (CRCS…FHPL) and 79–122 (EQCV…FFPQ). Disulfide bonds link C29–C127, C31–C58, C42–C57, C52–C69, C81–C107, C91–C106, and C101–C118.

Stomach and pancreas.

The protein localises to the secreted. Its function is as follows. Inhibits gastrointestinal motility and gastric acid secretion. Could function as a structural component of gastric mucus, possibly by stabilizing glycoproteins in the mucus gel through interactions with carbohydrate side chains. The polypeptide is Trefoil factor 2 (Tff2) (Mus musculus (Mouse)).